Consider the following 337-residue polypeptide: MANSC domain-containing protein 4 (337 aa).

Residues 1 to 18 (MRAVELLLLLGLASMVHG) form the signal peptide. The Extracellular segment spans residues 19-278 (LCSPTVFYRD…SSENEEPWDG (260 aa)). The MANSC domain maps to 33–113 (RFPGMLLDLE…LEPGASAILY (81 aa)). Asn-114, Asn-227, and Asn-251 each carry an N-linked (GlcNAc...) asparagine glycan. 2 stretches are compositionally biased toward polar residues: residues 216–230 (SPST…NKTI) and 239–260 (TRVS…VNKT). Residues 216–277 (SPSTDFTHSP…HSSENEEPWD (62 aa)) are disordered. Residues 279 to 299 (APASAGVWLACVTLGAAVISL) form a helical membrane-spanning segment. The Cytoplasmic segment spans residues 300 to 337 (CCRVVLGTSRCCGKRQGWSHMGQRSASGCRRNTLKENS). Residues 314–337 (RQGWSHMGQRSASGCRRNTLKENS) are disordered.

It localises to the membrane. In Mus musculus (Mouse), this protein is MANSC domain-containing protein 4 (Mansc4).